We begin with the raw amino-acid sequence, 149 residues long: Nucleoside diphosphate kinase (149 aa).

Residues K9, F57, R85, T91, R102, and N112 each contribute to the ATP site. Residue H115 is the Pros-phosphohistidine intermediate of the active site.

The protein belongs to the NDK family. Homotetramer. Mg(2+) is required as a cofactor.

The protein localises to the cytoplasm. It catalyses the reaction a 2'-deoxyribonucleoside 5'-diphosphate + ATP = a 2'-deoxyribonucleoside 5'-triphosphate + ADP. It carries out the reaction a ribonucleoside 5'-diphosphate + ATP = a ribonucleoside 5'-triphosphate + ADP. In terms of biological role, major role in the synthesis of nucleoside triphosphates other than ATP. The ATP gamma phosphate is transferred to the NDP beta phosphate via a ping-pong mechanism, using a phosphorylated active-site intermediate. This chain is Nucleoside diphosphate kinase, found in Crocosphaera subtropica (strain ATCC 51142 / BH68) (Cyanothece sp. (strain ATCC 51142)).